The sequence spans 607 residues: Elongation factor 4 (607 aa).

Residues 11–193 (ENIRNFSIIA…KIVEVVPPPE (183 aa)) form the tr-type G domain. GTP contacts are provided by residues 23–28 (DHGKST) and 140–143 (NKID).

It belongs to the TRAFAC class translation factor GTPase superfamily. Classic translation factor GTPase family. LepA subfamily.

The protein resides in the cell membrane. The catalysed reaction is GTP + H2O = GDP + phosphate + H(+). Its function is as follows. Required for accurate and efficient protein synthesis under certain stress conditions. May act as a fidelity factor of the translation reaction, by catalyzing a one-codon backward translocation of tRNAs on improperly translocated ribosomes. Back-translocation proceeds from a post-translocation (POST) complex to a pre-translocation (PRE) complex, thus giving elongation factor G a second chance to translocate the tRNAs correctly. Binds to ribosomes in a GTP-dependent manner. This chain is Elongation factor 4, found in Staphylococcus haemolyticus (strain JCSC1435).